A 184-amino-acid polypeptide reads, in one-letter code: Photosystem I assembly protein Ycf4 (184 aa).

The next 2 helical transmembrane spans lie at 19–39 and 57–77; these read ISNL…FLVG and IIFF…LFIS.

The protein belongs to the Ycf4 family.

Its subcellular location is the plastid thylakoid membrane. In terms of biological role, seems to be required for the assembly of the photosystem I complex. The protein is Photosystem I assembly protein Ycf4 of Cuscuta exaltata (Tall dodder).